A 429-amino-acid chain; its full sequence is Histidine--tRNA ligase (429 aa).

The protein belongs to the class-II aminoacyl-tRNA synthetase family. Homodimer.

The protein localises to the cytoplasm. The catalysed reaction is tRNA(His) + L-histidine + ATP = L-histidyl-tRNA(His) + AMP + diphosphate + H(+). This Rippkaea orientalis (strain PCC 8801 / RF-1) (Cyanothece sp. (strain PCC 8801)) protein is Histidine--tRNA ligase.